A 385-amino-acid polypeptide reads, in one-letter code: tRNA N6-adenosine threonylcarbamoyltransferase (385 aa).

A divalent metal cation is bound by residues H140, H144, and Y161. Substrate-binding positions include Y161–G165, D193, G208, E212, and N314. An a divalent metal cation-binding site is contributed by D343.

Belongs to the KAE1 / TsaD family. Component of the EKC/KEOPS complex composed of at least BUD32, CGI121, GON7, KAE1 and PCC1; the whole complex dimerizes. A divalent metal cation is required as a cofactor.

It is found in the cytoplasm. Its subcellular location is the nucleus. The catalysed reaction is L-threonylcarbamoyladenylate + adenosine(37) in tRNA = N(6)-L-threonylcarbamoyladenosine(37) in tRNA + AMP + H(+). Its function is as follows. Component of the EKC/KEOPS complex that is required for the formation of a threonylcarbamoyl group on adenosine at position 37 (t(6)A37) in tRNAs that read codons beginning with adenine. The complex is probably involved in the transfer of the threonylcarbamoyl moiety of threonylcarbamoyl-AMP (TC-AMP) to the N6 group of A37. KAE1 likely plays a direct catalytic role in this reaction, but requires other protein(s) of the complex to fulfill this activity. The EKC/KEOPS complex also promotes both telomere uncapping and telomere elongation. The complex is required for efficient recruitment of transcriptional coactivators. The polypeptide is tRNA N6-adenosine threonylcarbamoyltransferase (Eremothecium gossypii (strain ATCC 10895 / CBS 109.51 / FGSC 9923 / NRRL Y-1056) (Yeast)).